Consider the following 213-residue polypeptide: KHG/KDPG aldolase (213 aa).

The active-site Proton acceptor is Glu-45. The pyruvate site is built by Arg-49, Thr-73, and Lys-133. Catalysis depends on Lys-133, which acts as the Schiff-base intermediate with substrate.

Belongs to the KHG/KDPG aldolase family. In terms of assembly, homotrimer.

It localises to the cytoplasm. It catalyses the reaction 2-dehydro-3-deoxy-6-phospho-D-gluconate = D-glyceraldehyde 3-phosphate + pyruvate. It carries out the reaction (4S)-4-hydroxy-2-oxoglutarate = glyoxylate + pyruvate. It functions in the pathway carbohydrate acid metabolism; 2-dehydro-3-deoxy-D-gluconate degradation; D-glyceraldehyde 3-phosphate and pyruvate from 2-dehydro-3-deoxy-D-gluconate: step 2/2. It participates in carbohydrate metabolism; glyoxylate and dicarboxylate metabolism. In terms of biological role, involved in the degradation of glucose via the Entner-Doudoroff pathway. Catalyzes the reversible, stereospecific retro-aldol cleavage of 2-keto-3-deoxy-6-phosphogluconate (KDPG) to pyruvate and D-glyceraldehyde-3-phosphate. In addition to its KDPG aldolase activity, catalyzes the reversible cleavage of 2-keto-4-hydroxyglutarate (KHG) to glyoxylate and pyruvate. The enzyme is stereoselective for the S-enantiomer of KHG. Cleavage of KHG could serve in tricarboxylic acid (TCA) cycle regulation or, when operating in the reverse direction, in the detoxification of glyoxylate. The polypeptide is KHG/KDPG aldolase (eda) (Escherichia coli O157:H7).